The chain runs to 333 residues: Putative pectinesterase 14 (333 aa).

Positions 1–16 are cleaved as a signal peptide; sequence MLFFILFLSIISPIES. N-linked (GlcNAc...) asparagine glycosylation is found at Asn108 and Asn114. A substrate-binding site is contributed by Thr116. Residue Asn133 is glycosylated (N-linked (GlcNAc...) asparagine). Residue Gln151 coordinates substrate. Asp174 serves as the catalytic Proton donor. Catalysis depends on Asp195, which acts as the Nucleophile. Arg253 contributes to the substrate binding site. 2 N-linked (GlcNAc...) asparagine glycosylation sites follow: Asn302 and Asn323.

Belongs to the pectinesterase family. As to expression, expressed in flower buds.

Its subcellular location is the secreted. It is found in the cell wall. It carries out the reaction [(1-&gt;4)-alpha-D-galacturonosyl methyl ester](n) + n H2O = [(1-&gt;4)-alpha-D-galacturonosyl](n) + n methanol + n H(+). Its pathway is glycan metabolism; pectin degradation; 2-dehydro-3-deoxy-D-gluconate from pectin: step 1/5. Acts in the modification of cell walls via demethylesterification of cell wall pectin. This is Putative pectinesterase 14 (PME14) from Arabidopsis thaliana (Mouse-ear cress).